Reading from the N-terminus, the 213-residue chain is Proteasome subunit beta (213 aa).

A propeptide spans 1–11 (MSMIEEKIYKG) (removed in mature form; by autocatalysis). The Nucleophile role is filled by Thr-12.

It belongs to the peptidase T1B family. As to quaternary structure, the 20S proteasome core is composed of 14 alpha and 14 beta subunits that assemble into four stacked heptameric rings, resulting in a barrel-shaped structure. The two inner rings, each composed of seven catalytic beta subunits, are sandwiched by two outer rings, each composed of seven alpha subunits. The catalytic chamber with the active sites is on the inside of the barrel. Has probably a gated structure, the ends of the cylinder being occluded by the N-termini of the alpha-subunits. Is likely capped at one or both ends by the proteasome regulatory ATPase, PAN.

The protein localises to the cytoplasm. It catalyses the reaction Cleavage of peptide bonds with very broad specificity.. Its activity is regulated as follows. The formation of the proteasomal ATPase PAN-20S proteasome complex, via the docking of the C-termini of PAN into the intersubunit pockets in the alpha-rings, triggers opening of the gate for substrate entry. Interconversion between the open-gate and close-gate conformations leads to a dynamic regulation of the 20S proteasome proteolysis activity. Its function is as follows. Component of the proteasome core, a large protease complex with broad specificity involved in protein degradation. The polypeptide is Proteasome subunit beta (Archaeoglobus fulgidus (strain ATCC 49558 / DSM 4304 / JCM 9628 / NBRC 100126 / VC-16)).